A 184-amino-acid chain; its full sequence is Ribosome-recycling factor (184 aa).

Belongs to the RRF family.

It localises to the cytoplasm. Functionally, responsible for the release of ribosomes from messenger RNA at the termination of protein biosynthesis. May increase the efficiency of translation by recycling ribosomes from one round of translation to another. The chain is Ribosome-recycling factor from Borrelia recurrentis (strain A1).